Reading from the N-terminus, the 141-residue chain is MAMTVHVDIVSAEEQIFSGLAEFVALPGEAGELGILPGHMPLMTRIKPGAVRVKVQNQAEEEVVFVAGGLLEVQPGLVTVLADTAIRGKDLDEAKALEAKRKAEEALANQSSQLDYAKAQAELAEAIAQIAAIQRLKKGIH.

The protein belongs to the ATPase epsilon chain family. In terms of assembly, F-type ATPases have 2 components, CF(1) - the catalytic core - and CF(0) - the membrane proton channel. CF(1) has five subunits: alpha(3), beta(3), gamma(1), delta(1), epsilon(1). CF(0) has three main subunits: a, b and c.

The protein localises to the cell inner membrane. Functionally, produces ATP from ADP in the presence of a proton gradient across the membrane. The polypeptide is ATP synthase epsilon chain (Azoarcus sp. (strain BH72)).